Here is a 196-residue protein sequence, read N- to C-terminus: MAFKDWMNNLRDYFVEDDEEFNEPARPVQESRPTVASTPKPKVEERKAQPEYQTRRPAQSTSKAQTQTAAPKRAGSTFTKPMPEKIVQQQTVSQSQSVAATVSTIAIKEPRAYADIMESARIVKNGECVLVNFKFMGDAQARRSIDFMTGVVFTLDGDIQNVGGQIFLMTPANITVDAAKEMSILAGQNFESYDIY.

The tract at residues 16–81 (EDDEEFNEPA…KRAGSTFTKP (66 aa)) is disordered. Residues 56–69 (RPAQSTSKAQTQTA) are compositionally biased toward polar residues.

It belongs to the SepF family. As to quaternary structure, homodimer. Interacts with FtsZ.

Its subcellular location is the cytoplasm. In terms of biological role, cell division protein that is part of the divisome complex and is recruited early to the Z-ring. Probably stimulates Z-ring formation, perhaps through the cross-linking of FtsZ protofilaments. Its function overlaps with FtsA. The chain is Cell division protein SepF from Lactococcus lactis subsp. lactis (strain IL1403) (Streptococcus lactis).